The primary structure comprises 431 residues: Tryptophan--tRNA ligase (431 aa).

ATP contacts are provided by residues 12-14 (TPS) and 20-21 (GN). A 'HIGH' region motif is present at residues 13-21 (PSGTPHLGN). L-tryptophan is bound at residue Asp145. ATP contacts are provided by residues 157 to 159 (GRD), Leu197, and 204 to 208 (KMSKS). The short motif at 204 to 208 (KMSKS) is the 'KMSKS' region element.

Belongs to the class-I aminoacyl-tRNA synthetase family. Homodimer.

Its subcellular location is the cytoplasm. It catalyses the reaction tRNA(Trp) + L-tryptophan + ATP = L-tryptophyl-tRNA(Trp) + AMP + diphosphate + H(+). Catalyzes the attachment of tryptophan to tRNA(Trp). The chain is Tryptophan--tRNA ligase from Xanthomonas campestris pv. campestris (strain ATCC 33913 / DSM 3586 / NCPPB 528 / LMG 568 / P 25).